Reading from the N-terminus, the 2497-residue chain is Integrator complex subunit 1 homolog (2497 aa).

Residues 1–10 are compositionally biased toward basic residues; the sequence is MMLNKIKRSK. Disordered regions lie at residues 1–151, 300–337, 946–965, 1028–1108, 1234–1292, and 1572–1604; these read MMLN…NNNI, QPQPPQQQQTKQPVNIKTQPQQQQQQQQQPQPQQIKKS, QQQQQQLQTPQQQQQQQQPT, TTTT…TSSS, INNN…NQKS, and NNNNNNNNNNNNNNNNNNNNNNNNNNNNNNNIT. 5 stretches are compositionally biased toward low complexity: residues 37-46, 60-151, 305-333, 946-963, and 1028-1058; these read SDNNNNNSND, NNSI…NNNI, QQQQTKQPVNIKTQPQQQQQQQQQPQPQQ, QQQQQQLQTPQQQQQQQQ, and TTTTTSSTTTTTTTTTSTTTSTSTSSSSSSL. The segment covering 1075–1091 has biased composition (polar residues); sequence SGLSGSSNGINQSSDSI. 4 stretches are compositionally biased toward low complexity: residues 1097 to 1108, 1234 to 1265, 1272 to 1289, and 1572 to 1602; these read STSPTTTTTSSS, INNNDNNNNNNNNNNNNNNNNNNNNNDNNINK, HSNSMANNNLPNNNNKNN, and NNNNNNNNNNNNNNNNNNNNNNNNNNNNNNN. A coiled-coil region spans residues 1645-1675; sequence RILKNTTQQKQQKQQQKESVQKSIQSLSKLI. Over residues 2084–2115 the composition is skewed to low complexity; it reads QQQQQQQQQQQQQQKQQSNNSNNINNNNNNNN. Disordered regions lie at residues 2084–2123 and 2329–2350; these read QQQQQQQQQQQQQQKQQSNNSNNINNNNNNNNSEKKQKSK and NNNNNNNNNNNNNNNNNNNNNN.

Belongs to the Integrator subunit 1 family. Component of the Integrator complex. The core complex associates with protein phosphatase 2A subunits to form the Integrator-PP2A (INTAC) complex.

The protein resides in the nucleus. Its function is as follows. Component of the integrator complex, a multiprotein complex that terminates RNA polymerase II (Pol II) transcription in the promoter-proximal region of genes. The integrator complex provides a quality checkpoint during transcription elongation by driving premature transcription termination of transcripts that are unfavorably configured for transcriptional elongation: the complex terminates transcription by (1) catalyzing dephosphorylation of the C-terminal domain (CTD) of Pol II subunit polr2a, (2) degrading the exiting nascent RNA transcript via endonuclease activity and (3) promoting the release of Pol II from bound DNA. The integrator complex is also involved in terminating the synthesis of non-coding Pol II transcripts, such as enhancer RNAs (eRNAs), small nuclear RNAs (snRNAs), telomerase RNAs and long non-coding RNAs (lncRNAs). This chain is Integrator complex subunit 1 homolog (ints1), found in Dictyostelium discoideum (Social amoeba).